The chain runs to 658 residues: Interferon-induced GTP-binding protein Mx1 (658 aa).

Met-1 carries the N-acetylmethionine modification. Residues 1–20 (MVNSKGKITDSDPGSSHLLL) are disordered. A Dynamin-type G domain is found at 65-338 (DLALPAIAVI…LITHICKTLP (274 aa)). The G1 motif stretch occupies residues 75-82 (GDQSSGKS). 75 to 82 (GDQSSGKS) contacts GTP. Residues 100–102 (VTR) are G2 motif. Residues 176-179 (DLPG) form a G3 motif region. GTP contacts are provided by residues 176–180 (DLPGI) and 245–248 (TKPD). The segment at 245–248 (TKPD) is G4 motif. The tract at residues 277–280 (KCRG) is G5 motif. The tract at residues 339 to 364 (LLENQIKENYEKITEELQKYGSDVPE) is bundle signaling element (BSE). Residues 364–531 (EEEHEKMFFL…HFQMEQIVYC (168 aa)) are middle domain. Positions 365-628 (EEHEKMFFLI…KDTHNWLLKE (264 aa)) are stalk. The critical for lipid-binding stretch occupies residues 551–554 (KDRK). One can recognise a GED domain in the interval 570–658 (LSDIFEHLLA…ARRRLAKFPG (89 aa)).

It belongs to the TRAFAC class dynamin-like GTPase superfamily. Dynamin/Fzo/YdjA family. Homooligomer. Oligomerizes into multimeric filamentous or ring-like structures by virtue of its stalk domain. Oligomerization is critical for GTPase activity, protein stability, and recognition of viral target structures. Interacts with TRPC1, TRPC3, TRPC4, TRPC5, TRPC6 and TRPC7. Interacts with HSPA5. Interacts with TUBB/TUBB5. Interacts with DDX39A and DDX39B. In terms of processing, ISGylated.

It is found in the cytoplasm. It localises to the endoplasmic reticulum membrane. Its subcellular location is the perinuclear region. Functionally, interferon-induced dynamin-like GTPase with antiviral activity. The polypeptide is Interferon-induced GTP-binding protein Mx1 (MX1) (Eumetopias jubatus (Steller sea lion)).